The sequence spans 335 residues: Holliday junction branch migration complex subunit RuvB (335 aa).

The segment at 2 to 184 (ADERIVSAEN…FGIVEHMAYY (183 aa)) is large ATPase domain (RuvB-L). ATP contacts are provided by residues Leu23, Arg24, Gly65, Lys68, Thr69, Thr70, 131–133 (EDF), Arg174, Tyr184, and Arg221. Thr69 serves as a coordination point for Mg(2+). A small ATPAse domain (RuvB-S) region spans residues 185–255 (TEADLMDIVQ…IADHALSQLQ (71 aa)). The tract at residues 258-335 (IRGLDGVDRK…AHLGMPYPEK (78 aa)) is head domain (RuvB-H). Residues Arg313 and Arg318 each coordinate DNA.

It belongs to the RuvB family. Homohexamer. Forms an RuvA(8)-RuvB(12)-Holliday junction (HJ) complex. HJ DNA is sandwiched between 2 RuvA tetramers; dsDNA enters through RuvA and exits via RuvB. An RuvB hexamer assembles on each DNA strand where it exits the tetramer. Each RuvB hexamer is contacted by two RuvA subunits (via domain III) on 2 adjacent RuvB subunits; this complex drives branch migration. In the full resolvosome a probable DNA-RuvA(4)-RuvB(12)-RuvC(2) complex forms which resolves the HJ.

The protein localises to the cytoplasm. The enzyme catalyses ATP + H2O = ADP + phosphate + H(+). In terms of biological role, the RuvA-RuvB-RuvC complex processes Holliday junction (HJ) DNA during genetic recombination and DNA repair, while the RuvA-RuvB complex plays an important role in the rescue of blocked DNA replication forks via replication fork reversal (RFR). RuvA specifically binds to HJ cruciform DNA, conferring on it an open structure. The RuvB hexamer acts as an ATP-dependent pump, pulling dsDNA into and through the RuvAB complex. RuvB forms 2 homohexamers on either side of HJ DNA bound by 1 or 2 RuvA tetramers; 4 subunits per hexamer contact DNA at a time. Coordinated motions by a converter formed by DNA-disengaged RuvB subunits stimulates ATP hydrolysis and nucleotide exchange. Immobilization of the converter enables RuvB to convert the ATP-contained energy into a lever motion, pulling 2 nucleotides of DNA out of the RuvA tetramer per ATP hydrolyzed, thus driving DNA branch migration. The RuvB motors rotate together with the DNA substrate, which together with the progressing nucleotide cycle form the mechanistic basis for DNA recombination by continuous HJ branch migration. Branch migration allows RuvC to scan DNA until it finds its consensus sequence, where it cleaves and resolves cruciform DNA. The sequence is that of Holliday junction branch migration complex subunit RuvB from Latilactobacillus sakei subsp. sakei (strain 23K) (Lactobacillus sakei subsp. sakei).